A 612-amino-acid chain; its full sequence is Coagulation factor X-activating enzyme heavy chain (612 aa).

A signal peptide spans 1 to 20; it reads MMQVLLVTISLAVFPYQGSS. Positions 21-193 are cleaved as a propeptide — or 194; the sequence is IILESGNVND…KKASQLVATS (173 aa). One can recognise a Peptidase M12B domain in the interval 201–395; that stretch reads TFIELVIVVD…YKPKCILNPP (195 aa). Ca(2+) is bound at residue Glu-204. N-linked (GlcNAc...) asparagine glycosylation occurs at Asn-259. Asp-286 provides a ligand contact to Ca(2+). Disulfide bonds link Cys-310–Cys-390, Cys-350–Cys-374, and Cys-352–Cys-357. His-335 serves as a coordination point for Zn(2+). Glu-336 is a catalytic residue. Residues His-339 and His-345 each contribute to the Zn(2+) site. Asn-353 and Asn-373 each carry an N-linked (GlcNAc...) asparagine glycan. Cys-390, Asn-393, Ile-405, Asn-408, Glu-412, Glu-415, and Asp-418 together coordinate Ca(2+). Positions 403–489 constitute a Disintegrin domain; it reads PPICGNEIWE…ECPADGFHAN (87 aa). Cys-461 and Cys-481 are joined by a disulfide. The D/ECD-tripeptide motif lies at 467–469; the sequence is ECD.

This sequence belongs to the venom metalloproteinase (M12B) family. P-III subfamily. P-IIId sub-subfamily. Heterotrimer; disulfide-linked. The heterotrimer consists of 1 heavy chain and 2 light chains (lectins): LC1 and LC2 (AC Q7T045 and AC Q696W1). Zn(2+) is required as a cofactor. Post-translationally, N-glycosylated. Contains 8.0% of hexoses, 2.5% of hexosamines and 2.5% of sialic acids. Expressed by the venom gland.

It is found in the secreted. The enzyme catalyses Specifically activates several components of the blood clotting system, including coagulation factor X, coagulation factor IX and protein C by cleavage of Arg-|-Xaa bonds. Has no action on insulin B chain.. Its activity is regulated as follows. Calcium is required for the activity of the heterotrimer. Its function is as follows. Catalytic subunit of blood coagulation factor X-activating enzyme. Activates coagulation factor X (F10) by cleaving the Arg(234)-Ile(235) bond, activates coagulation factor IX (F9) by cleaving the Arg(226)-Val(227) bond and is also able to activate protein C (PROC). The sequence is that of Coagulation factor X-activating enzyme heavy chain from Macrovipera lebetinus (Levantine viper).